The chain runs to 262 residues: MDGCGTYLDTMRREAPLVQCITNFVAMNVVANVLLAAGASPAMVHDAEESGEFAAIAQALTINMGTPSPRWVEGMEAAARGATAAGRPWVLDPVAVGATAFRRGLGARLLALKPTVIRGNASEILALAGAETRGKGADSADPVAAAEAAAQRLAESSGAVVAVTGPVDFVTDGRRGIRCANGHPLMPRVTALGCSLTGIVGAFAAIRPPFEATAAALAFFGLAGEEAAKTATGPGSFQVAFLDALHALSPEALDRGARLEAA.

M43 is a substrate binding site. Positions 118 and 164 each coordinate ATP. Position 191 (A191) interacts with substrate.

Belongs to the Thz kinase family. Mg(2+) serves as cofactor.

It carries out the reaction 5-(2-hydroxyethyl)-4-methylthiazole + ATP = 4-methyl-5-(2-phosphooxyethyl)-thiazole + ADP + H(+). Its pathway is cofactor biosynthesis; thiamine diphosphate biosynthesis; 4-methyl-5-(2-phosphoethyl)-thiazole from 5-(2-hydroxyethyl)-4-methylthiazole: step 1/1. Its function is as follows. Catalyzes the phosphorylation of the hydroxyl group of 4-methyl-5-beta-hydroxyethylthiazole (THZ). The protein is Hydroxyethylthiazole kinase of Cereibacter sphaeroides (strain KD131 / KCTC 12085) (Rhodobacter sphaeroides).